The chain runs to 70 residues: Translation initiation factor IF-1 (70 aa).

The 70-residue stretch at 1 to 70 folds into the S1-like domain; it reads MKETNLSIKG…LTKGRIIYRH (70 aa).

The protein belongs to the IF-1 family. In terms of assembly, component of the 30S ribosomal translation pre-initiation complex which assembles on the 30S ribosome in the order IF-2 and IF-3, IF-1 and N-formylmethionyl-tRNA(fMet); mRNA recruitment can occur at any time during PIC assembly.

The protein localises to the cytoplasm. In terms of biological role, one of the essential components for the initiation of protein synthesis. Stabilizes the binding of IF-2 and IF-3 on the 30S subunit to which N-formylmethionyl-tRNA(fMet) subsequently binds. Helps modulate mRNA selection, yielding the 30S pre-initiation complex (PIC). Upon addition of the 50S ribosomal subunit IF-1, IF-2 and IF-3 are released leaving the mature 70S translation initiation complex. The protein is Translation initiation factor IF-1 of Mycoplasmoides gallisepticum (strain R(low / passage 15 / clone 2)) (Mycoplasma gallisepticum).